Consider the following 123-residue polypeptide: Insulin-like peptide-1 (123 aa).

Residues 1-24 (MTTSSYFLLVALGLLLYVCQSSFG) form the signal peptide. 4 disulfides stabilise this stretch: Cys-29–Cys-106, Cys-41–Cys-109, Cys-53–Cys-122, and Cys-108–Cys-113. 4-hydroxyproline; partial is present on Pro-34. The propeptide at 59-102 (EQGGANNARAYTGRTSSLMKRRGFLSLLKKRGKRDEGSLQRSGR) is c peptide. Glu-107 is modified (4-carboxyglutamate). Residue Glu-117 is modified to 4-carboxyglutamate; partial.

Belongs to the insulin family. As to quaternary structure, heterodimer of A and B chains; disulfide-linked. As to expression, expressed by the venom duct.

It is found in the secreted. This venom insulin facilitates prey capture by rapidly inducing hypoglycemic shock. Intraperitoneal injection of this peptide into zebrafish lowers blood glucose with the same potency than human insulin. In vivo, when applied to water, this peptide reduces overall locomotor activity of zebrafish larvae, observed as a significant decrease in the percentage of time spent swimming and movement frequency. This chain is Insulin-like peptide-1, found in Conus victoriae (Queen Victoria cone).